The following is a 158-amino-acid chain: UPF0758 protein YkfG (158 aa).

Residues 36–158 (AFTSTHAVRE…IYSFAEHGLL (123 aa)) form the MPN domain. 3 residues coordinate Zn(2+): His107, His109, and Asp120. The JAMM motif signature appears at 107-120 (HNHPSGETTPSQAD).

The protein belongs to the UPF0758 family.

This is UPF0758 protein YkfG (ykfG) from Escherichia coli (strain K12).